Reading from the N-terminus, the 125-residue chain is Protein ELF4-LIKE 1 (125 aa).

A compositionally biased stretch (polar residues) spans 1 to 18; it reads MEASRNRSLVGNNRSPEM. Residues 1–28 form a disordered region; the sequence is MEASRNRSLVGNNRSPEMNENDGEDVAA.

This sequence belongs to the EARLY FLOWERING 4 family. Homodimer.

It is found in the nucleus. Component of the central CCA1/LHY-TOC1 feedback loop in the circadian clock that promotes clock accuracy and is required for sustained rhythms in the absence of daily light/dark cycles. The chain is Protein ELF4-LIKE 1 (EFL1) from Arabidopsis thaliana (Mouse-ear cress).